The chain runs to 256 residues: Imidazole glycerol phosphate synthase subunit HisF (256 aa).

Active-site residues include Asp12 and Asp131.

The protein belongs to the HisA/HisF family. Heterodimer of HisH and HisF.

It is found in the cytoplasm. It carries out the reaction 5-[(5-phospho-1-deoxy-D-ribulos-1-ylimino)methylamino]-1-(5-phospho-beta-D-ribosyl)imidazole-4-carboxamide + L-glutamine = D-erythro-1-(imidazol-4-yl)glycerol 3-phosphate + 5-amino-1-(5-phospho-beta-D-ribosyl)imidazole-4-carboxamide + L-glutamate + H(+). The protein operates within amino-acid biosynthesis; L-histidine biosynthesis; L-histidine from 5-phospho-alpha-D-ribose 1-diphosphate: step 5/9. IGPS catalyzes the conversion of PRFAR and glutamine to IGP, AICAR and glutamate. The HisF subunit catalyzes the cyclization activity that produces IGP and AICAR from PRFAR using the ammonia provided by the HisH subunit. This Pseudomonas entomophila (strain L48) protein is Imidazole glycerol phosphate synthase subunit HisF.